We begin with the raw amino-acid sequence, 142 residues long: Profilin (142 aa).

The protein belongs to the profilin family. Occurs in many kinds of cells as a complex with monomeric actin in a 1:1 ratio. In terms of tissue distribution, expressed specifically in coelomocytes in response to injury.

It localises to the cytoplasm. The protein localises to the cytoskeleton. In terms of biological role, binds to actin and affects the structure of the cytoskeleton. At high concentrations, profilin prevents the polymerization of actin, whereas it enhances it at low concentrations. By binding to PIP2, it inhibits the formation of IP3 and DG. This chain is Profilin, found in Strongylocentrotus purpuratus (Purple sea urchin).